Consider the following 506-residue polypeptide: Histone acetyltransferase esa-1 (506 aa).

The disordered stretch occupies residues 1–24; the sequence is MSPPGGDATVGSDEKRQKGKATPD. In terms of domain architecture, Tudor-knot spans 26 to 78; the sequence is IKMGCIAMVMKEGQLRRAEILSIKDTKSGRQFYCNFDNFNKRLDEWVPAARID. The segment at 82-215 is disordered; it reads DVEWPNPDKD…LRTSGSMTQN (134 aa). Residues 87–98 show a composition bias toward basic and acidic residues; sequence NPDKDKQKDAKT. Positions 109–120 are enriched in basic residues; it reads QPSKKNNQKKAS. Basic and acidic residues predominate over residues 167–178; sequence GGDKGVKRKADE. Residues 220-494 form the MYST-type HAT domain; it reads SRIRNISKVE…IDPERIQWKP (275 aa). The segment at 253–278 adopts a C2HC MYST-type zinc-finger fold; it reads IYICEFCLSYYGELKSFVRHRQKCTL. An ESA1-RPD3 motif motif is present at residues 303–324; the sequence is RTWCRNLCLLSKMFLDHKTLYY. Residue K320 is modified to N6-acetyllysine; by autocatalysis. Acetyl-CoA-binding positions include 361 to 365 and 370 to 376; these read ACILT and QRKGYGR. The active-site Proton donor/acceptor is the E396. Residue S400 participates in acetyl-CoA binding.

Belongs to the MYST (SAS/MOZ) family. Component of the NuA4 histone acetyltransferase complex. In terms of processing, autoacetylation at Lys-320 is required for proper function.

It is found in the nucleus. The protein localises to the chromosome. The enzyme catalyses L-lysyl-[histone] + acetyl-CoA = N(6)-acetyl-L-lysyl-[histone] + CoA + H(+). The catalysed reaction is L-lysyl-[protein] + acetyl-CoA = N(6)-acetyl-L-lysyl-[protein] + CoA + H(+). It carries out the reaction 2-hydroxyisobutanoyl-CoA + L-lysyl-[protein] = N(6)-(2-hydroxyisobutanoyl)-L-lysyl-[protein] + CoA + H(+). It catalyses the reaction (2E)-butenoyl-CoA + L-lysyl-[protein] = N(6)-(2E)-butenoyl-L-lysyl-[protein] + CoA + H(+). In terms of biological role, catalytic component of the NuA4 histone acetyltransferase (HAT) complex which is involved in epigenetic transcriptional activation of selected genes principally by acetylation of nucleosomal histones H4, H3, H2B, H2A and H2A variant H2A.Z. Acetylates histone H4 to form H4K5ac, H4K8ac, H4K12ac and H4K16ac, histone H3 to form H3K14ac, and histone H2A to form H2AK4ac and H2AK7ac. The NuA4 complex is involved in the DNA damage response and is required for chromosome segregation. The NuA4 complex plays a direct role in repair of DNA double-strand breaks (DSBs) through homologous recombination. Recruitment to promoters depends on H3K4me. Also acetylates non-histone proteins. In addition to protein acetyltransferase, can use different acyl-CoA substrates, such as 2-hydroxyisobutanoyl-CoA (2-hydroxyisobutyryl-CoA) or (2E)-butenoyl-CoA (crotonyl-CoA), and is able to mediate protein 2-hydroxyisobutyrylation and crotonylation, respectively. This chain is Histone acetyltransferase esa-1 (esa-1), found in Neurospora crassa (strain ATCC 24698 / 74-OR23-1A / CBS 708.71 / DSM 1257 / FGSC 987).